A 178-amino-acid chain; its full sequence is Large ribosomal subunit protein uL6 (178 aa).

The disordered stretch occupies residues 159-178 (GKGIRYEGEHVRRKEGKTGK).

It belongs to the universal ribosomal protein uL6 family. As to quaternary structure, part of the 50S ribosomal subunit.

Functionally, this protein binds to the 23S rRNA, and is important in its secondary structure. It is located near the subunit interface in the base of the L7/L12 stalk, and near the tRNA binding site of the peptidyltransferase center. This chain is Large ribosomal subunit protein uL6, found in Listeria monocytogenes serotype 4b (strain CLIP80459).